The following is a 642-amino-acid chain: Regulator of MON1-CCZ1 complex (642 aa).

The Mic1 domain occupies 462–616; sequence RPYTESILML…KLYETLSFPK (155 aa).

It belongs to the RMC1 family. In terms of assembly, component of the Mon1-Ccz1 guanyl-nucleotide exchange factor complex made up of Mon1, Ccz1 and Bulli; the interaction of Bulli with the Mon1-Ccz1 heterodimer is mediated via the C-terminal Mic1 domain of Bulli. Mon1 and Ccz1 form a stable complex which displays Rab7 GEF activity with or without Bulli; GEF activity is enhanced by Bulli possibly by improving membrane association of the complex.

Its subcellular location is the late endosome. In terms of biological role, positive regulator of the Rab7 guanyl-nucleotide exchange activity of the Mon1-Ccz1 complex, possibly by enhancing its endosomal membrane association. As part of the Mon1-Ccz1 complex involved in endolysosomal biogenesis possibly by mediating Rab conversion, the replacement of Rab5 with Rab7 during late endosome maturation. This chain is Regulator of MON1-CCZ1 complex, found in Drosophila melanogaster (Fruit fly).